The chain runs to 309 residues: Probable ABC transporter permease protein YqgH (309 aa).

6 consecutive transmembrane segments (helical) span residues 30–50 (MIVT…TIFL), 88–108 (FIFG…PLGI), 133–153 (LVGI…VPFI), 165–185 (LLAG…SISA), 214–234 (LVPA…ARAF), and 280–300 (NTLW…ILLI). The ABC transmembrane type-1 domain maps to 89-300 (IFGSFAVTIL…VMSFLFILLI (212 aa)).

It belongs to the binding-protein-dependent transport system permease family. CysTW subfamily.

It is found in the cell membrane. Functionally, part of the binding-protein-dependent transport system YqgGHIJK. Probably responsible for the translocation of the substrate across the membrane. This chain is Probable ABC transporter permease protein YqgH (yqgH), found in Bacillus subtilis (strain 168).